Consider the following 427-residue polypeptide: G2/mitotic-specific cyclin-3 (427 aa).

Residues 1-12 are compositionally biased toward polar residues; the sequence is MHHNSQSLSSGH. 2 disordered regions span residues 1–29 and 89–126; these read MHHN…NLKH and SVAQ…EDQE. Basic and acidic residues predominate over residues 89–105; it reads SVAQRKEADHNDLLTDR. Over residues 106–126 the composition is skewed to acidic residues; it reads EQEEPVEDDGESEEDEEEDQE.

It belongs to the cyclin family. Cyclin AB subfamily.

In terms of biological role, essential for the control of the cell cycle at the G2/M (mitosis) transition. Interacts with the CDC2 protein kinase to form MPF. G2/M cyclins accumulate steadily during G2 and are abruptly destroyed at mitosis. This is G2/mitotic-specific cyclin-3 (CLB3) from Saccharomyces cerevisiae (strain ATCC 204508 / S288c) (Baker's yeast).